A 200-amino-acid chain; its full sequence is MLFRYLVWLFRFIEVKNVASISLLVIGSNSLTTAISNNTSTTILPTTSSNSLMTAIPNNTSTTISPTTSSNYLTSAISTNISDKEEDTPFSTDKTVFDGLSPITLYRTIRSTLNDTSTKTMTDHILTRPYRPTTVIFHSDTPQPVKNATQGNIIKKTYRQVLTFFIQPNPLFPCFKNHEVFLNLANILNTILCIILIKNV.

Repeat copies occupy residues 28–48 (SNSL…PTTS) and 49–69 (SNSL…PTTS). One copy of the 3; approximate repeat lies at 70-91 (SNYLTSAISTNISDKEEDTPFS).

This sequence belongs to the asfivirus I196L family.

This is Late protein I196L from African swine fever virus (isolate Tick/South Africa/Pretoriuskop Pr4/1996) (ASFV).